The chain runs to 276 residues: Formamidopyrimidine-DNA glycosylase (276 aa).

Pro-2 (schiff-base intermediate with DNA) is an active-site residue. Glu-3 functions as the Proton donor in the catalytic mechanism. The active-site Proton donor; for beta-elimination activity is Lys-58. DNA is bound by residues His-94, Arg-112, and Arg-157. The segment at 242 to 276 (FVYDRAGQPCRVCGTPIKQIVQGQRSTYYCPTCQR) adopts an FPG-type zinc-finger fold. Arg-266 acts as the Proton donor; for delta-elimination activity in catalysis.

Belongs to the FPG family. In terms of assembly, monomer. The cofactor is Zn(2+).

The catalysed reaction is Hydrolysis of DNA containing ring-opened 7-methylguanine residues, releasing 2,6-diamino-4-hydroxy-5-(N-methyl)formamidopyrimidine.. It catalyses the reaction 2'-deoxyribonucleotide-(2'-deoxyribose 5'-phosphate)-2'-deoxyribonucleotide-DNA = a 3'-end 2'-deoxyribonucleotide-(2,3-dehydro-2,3-deoxyribose 5'-phosphate)-DNA + a 5'-end 5'-phospho-2'-deoxyribonucleoside-DNA + H(+). Functionally, involved in base excision repair of DNA damaged by oxidation or by mutagenic agents. Acts as a DNA glycosylase that recognizes and removes damaged bases. Has a preference for oxidized purines, such as 7,8-dihydro-8-oxoguanine (8-oxoG). Has AP (apurinic/apyrimidinic) lyase activity and introduces nicks in the DNA strand. Cleaves the DNA backbone by beta-delta elimination to generate a single-strand break at the site of the removed base with both 3'- and 5'-phosphates. The protein is Formamidopyrimidine-DNA glycosylase of Paraburkholderia phymatum (strain DSM 17167 / CIP 108236 / LMG 21445 / STM815) (Burkholderia phymatum).